Reading from the N-terminus, the 340-residue chain is Tryptophan--tRNA ligase (340 aa).

ATP contacts are provided by residues 11–13 and 19–20; these read RPT and GH. Positions 12-20 match the 'HIGH' region motif; it reads PTGKLHLGH. Aspartate 140 is an L-tryptophan binding site. Residues 152 to 154, leucine 194, and 202 to 206 each bind ATP; these read GND and KMSKS. A 'KMSKS' region motif is present at residues 202–206; that stretch reads KMSKS.

This sequence belongs to the class-I aminoacyl-tRNA synthetase family. In terms of assembly, homodimer.

Its subcellular location is the cytoplasm. The catalysed reaction is tRNA(Trp) + L-tryptophan + ATP = L-tryptophyl-tRNA(Trp) + AMP + diphosphate + H(+). Catalyzes the attachment of tryptophan to tRNA(Trp). In Streptococcus pyogenes serotype M3 (strain ATCC BAA-595 / MGAS315), this protein is Tryptophan--tRNA ligase.